Reading from the N-terminus, the 188-residue chain is dCTP deaminase (188 aa).

DCTP contacts are provided by residues 111–116, 135–137, glutamine 156, tyrosine 170, lysine 179, and glutamine 180; these read KSTYAR and TLE. Glutamate 137 functions as the Proton donor/acceptor in the catalytic mechanism.

Belongs to the dCTP deaminase family. Homotrimer.

The enzyme catalyses dCTP + H2O + H(+) = dUTP + NH4(+). Its pathway is pyrimidine metabolism; dUMP biosynthesis; dUMP from dCTP (dUTP route): step 1/2. Catalyzes the deamination of dCTP to dUTP. The polypeptide is dCTP deaminase (Rickettsia canadensis (strain McKiel)).